A 498-amino-acid polypeptide reads, in one-letter code: Tyrosine 3-monooxygenase (498 aa).

A compositionally biased stretch (polar residues) spans 1-10; sequence MPTPSASSPQ. A disordered region spans residues 1–33; sequence MPTPSASSPQPKGFRRAVSEQDTKQAEAVTSPR. 2 positions are modified to phosphoserine: S19 and S31. S40 bears the Phosphoserine; by CaMK2 and PKA mark. Fe cation contacts are provided by H331, H336, and E376. S472 carries the post-translational modification Phosphoserine.

It belongs to the biopterin-dependent aromatic amino acid hydroxylase family. In terms of assembly, homotetramer. Interacts (when phosphorylated at Ser-19) with YWHAG; one YWHAG dimer bounds to one TH tetramer and this interaction may influence the phosphorylation and dephosphorylation of other sites. Interacts with NT5DC2; the interaction results in reduced phosphorylation and decreased catalytic activity of TH. Fe(2+) is required as a cofactor. In terms of processing, phosphorylated on Ser-19, Ser-31 and Ser-40 by several protein kinases with different site specificities. Phosphorylation at Ser-31 and Ser-40 leads to an increase of TH activity. Phosphorylation at Ser-40 activates the enzyme and also counteracts the feedback inhibition of TH by catecholamines. Phosphorylation of Ser-19 and Ser-31 triggers the proteasomal degradation of TH through the ubiquitin-proteasome pathway. Phosphorylation at Ser-31 facilitates transport of TH from the soma to the nerve terminals via the microtubule network. Phosphorylation at Ser-19 induces the high-affinity binding to the 14-3-3 protein YWHAG; this interaction may influence the phosphorylation and dephosphorylation of other sites. Ser-19 increases the phosphorylation at Ser-40 in a hierarchical manner, leading to increased activity. In terms of tissue distribution, expressed in the adrenal gland. Expressed in the retina. Expressed in the in the striatum (at protein level).

It localises to the cytoplasm. The protein resides in the perinuclear region. Its subcellular location is the nucleus. The protein localises to the cell projection. It is found in the axon. It localises to the cytoplasmic vesicle. The protein resides in the secretory vesicle. Its subcellular location is the synaptic vesicle. It catalyses the reaction (6R)-L-erythro-5,6,7,8-tetrahydrobiopterin + L-tyrosine + O2 = (4aS,6R)-4a-hydroxy-L-erythro-5,6,7,8-tetrahydrobiopterin + L-dopa. It functions in the pathway catecholamine biosynthesis; dopamine biosynthesis; dopamine from L-tyrosine: step 1/2. With respect to regulation, inhibited in feedback fashion by the catecholamine neurotransmitters, especially by dopamine in competition with tetrahydrobiopterin. Phosphorylation of several Ser/Thr residues in the N-terminus regulates the catalytic activity. Ser-31 and Ser-40 are readily phosphorylated to activate the catalytic activity. A Cysteine modification induced by N-ethylmaleimide (NEM), inhibits tyrosine 3-monooxygenase activity through the modification of the Cys-177. Its function is as follows. Catalyzes the conversion of L-tyrosine to L-dihydroxyphenylalanine (L-Dopa), the rate-limiting step in the biosynthesis of catecholamines, dopamine, noradrenaline, and adrenaline. Uses tetrahydrobiopterin and molecular oxygen to convert tyrosine to L-Dopa. In addition to tyrosine, is able to catalyze the hydroxylation of phenylalanine and tryptophan with lower specificity. Positively regulates the regression of retinal hyaloid vessels during postnatal development. The protein is Tyrosine 3-monooxygenase (Th) of Mus musculus (Mouse).